Consider the following 239-residue polypeptide: Ureidoacrylate amidohydrolase RutB (239 aa).

The Proton acceptor role is filled by Asp-35. Lys-144 is a catalytic residue. Residue Cys-177 is the Nucleophile of the active site.

This sequence belongs to the isochorismatase family. RutB subfamily.

It carries out the reaction (Z)-3-ureidoacrylate + H2O + H(+) = (Z)-3-aminoacrylate + NH4(+) + CO2. The catalysed reaction is (Z)-3-ureidoacrylate + H2O = (Z)-3-aminoacrylate + carbamate + H(+). The enzyme catalyses (Z)-2-methylureidoacrylate + H2O + H(+) = (Z)-2-methylaminoacrylate + NH4(+) + CO2. Hydrolyzes ureidoacrylate to form aminoacrylate and carbamate. The carbamate hydrolyzes spontaneously, thereby releasing one of the nitrogen atoms of the pyrimidine ring as ammonia and one of its carbon atoms as CO2. The chain is Ureidoacrylate amidohydrolase RutB from Caulobacter segnis (strain ATCC 21756 / DSM 7131 / JCM 7823 / NBRC 15250 / LMG 17158 / TK0059) (Mycoplana segnis).